The sequence spans 350 residues: Induced myeloid leukemia cell differentiation protein Mcl-1 homolog (350 aa).

Residue Lys5 forms a Glycyl lysine isopeptide (Lys-Gly) (interchain with G-Cter in ubiquitin) linkage. The interval 23–95 (AGSGGASSSG…GPNVSATPPR (73 aa)) is disordered. Residues 31–41 (SGGRLLASGRE) show a composition bias toward low complexity. Positions 50-61 (GGEAGAVIGGSA) are enriched in gly residues. Positions 104–175 (RASPPEEMEG…PAEEEEDELY (72 aa)) are PEST-like. Ser121 carries the phosphoserine modification. Lys136 participates in a covalent cross-link: Glycyl lysine isopeptide (Lys-Gly) (interchain with G-Cter in ubiquitin). The interval 150 to 169 (ASSGPGMDGSLPSTPPPAEE) is disordered. The residue at position 159 (Ser159) is a Phosphoserine; by GSK3-alpha and GSK3-beta. Ser162 carries the phosphoserine modification. Position 163 is a phosphothreonine (Thr163). Glycyl lysine isopeptide (Lys-Gly) (interchain with G-Cter in ubiquitin) cross-links involve residues Lys194 and Lys197. Residues 209–223 (ALETLQRVGDGVQRN) carry the BH3 motif. The short motif at 252–272 (HVFSDGVTNWGRIVTLISFGA) is the BH1 element. The short motif at 304–319 (DWLVKQRGWDGFVEFF) is the BH2 element. The chain crosses the membrane as a helical span at residues 327-349 (GIRNVLLAFAGVAGVGAGLAYLI).

It belongs to the Bcl-2 family. As to quaternary structure, interacts with HIF3A (via C-terminus domain). Interacts with BOK, BIK, BAX, BAK1, and TPT1. Interacts with unphosphorylated BAD. Interacts with BMF, BBC3 and PMAIP1. Interacts with BOP. Interacts with BCL2L11; may sequester BCL2L11 to prevent its pro-apoptotic activity. Interacts with GIMAP5 and HSPA8/HSC70; the interaction between HSPA8 and MCL1 is impaired in the absence of GIMAP5. Cleaved by CASP3 during apoptosis, yielding a pro-apoptotic C-terminal fragment. In terms of processing, rapidly degraded in the absence of phosphorylation in the PEST region. Post-translationally, phosphorylated on Ser-159, by GSK3, in response to IL3/interleukin-3 withdrawal. Phosphorylation at Ser-159 induces ubiquitination and proteasomal degradation, abrogating the anti-apoptotic activity. Treatment with taxol or okadaic acid induces phosphorylation on additional sites. Ubiquitinated. Ubiquitination is induced by phosphorylation at Ser-159. Deubiquitinated by USP20; leading to increased stability. As to expression, detected in peripheral blood mononuclear cells and bone marrow.

Its subcellular location is the membrane. It is found in the cytoplasm. It localises to the mitochondrion. The protein resides in the nucleus. The protein localises to the nucleoplasm. In terms of biological role, involved in the regulation of apoptosis versus cell survival, and in the maintenance of viability but not of proliferation. Mediates its effects by interactions with a number of other regulators of apoptosis. The sequence is that of Induced myeloid leukemia cell differentiation protein Mcl-1 homolog (MCL1) from Canis lupus familiaris (Dog).